The primary structure comprises 491 residues: Protein nucleotidyltransferase YdiU (491 aa).

ATP-binding residues include Gly94, Gly96, Arg97, Lys117, Asp129, Gly130, Arg180, and Arg187. Asp256 serves as the catalytic Proton acceptor. Residues Asn257 and Asp266 each coordinate Mg(2+). Residue Asp266 participates in ATP binding.

Belongs to the SELO family. Mg(2+) serves as cofactor. The cofactor is Mn(2+).

It catalyses the reaction L-seryl-[protein] + ATP = 3-O-(5'-adenylyl)-L-seryl-[protein] + diphosphate. The enzyme catalyses L-threonyl-[protein] + ATP = 3-O-(5'-adenylyl)-L-threonyl-[protein] + diphosphate. The catalysed reaction is L-tyrosyl-[protein] + ATP = O-(5'-adenylyl)-L-tyrosyl-[protein] + diphosphate. It carries out the reaction L-histidyl-[protein] + UTP = N(tele)-(5'-uridylyl)-L-histidyl-[protein] + diphosphate. It catalyses the reaction L-seryl-[protein] + UTP = O-(5'-uridylyl)-L-seryl-[protein] + diphosphate. The enzyme catalyses L-tyrosyl-[protein] + UTP = O-(5'-uridylyl)-L-tyrosyl-[protein] + diphosphate. Nucleotidyltransferase involved in the post-translational modification of proteins. It can catalyze the addition of adenosine monophosphate (AMP) or uridine monophosphate (UMP) to a protein, resulting in modifications known as AMPylation and UMPylation. This Clostridium botulinum (strain Okra / Type B1) protein is Protein nucleotidyltransferase YdiU.